The chain runs to 630 residues: MTDYRLWSNTNTTNTCDDTMMMDSFLSSDPSSFWPASTPNRPTPVNGVGETMPFFNQESLQQRLQALIDGARESWAYAIFWQSSVVDFASQTVLGWGDGYYKGEEDKNKRRGSSSSAANFVAEQEHRKKVLRELNSLISGVQASAGNGTDDAVDEEVTDTEWFFLISMTQSFVNGNGLPGLAMYSSSPIWVTGTEKLAASQCERARQAQGFGLQTIVCIPSANGVVELGSTELIFQSSDLMNKVKYLFNFNIDMGSVTGSGSGSGSCAVHPEPDPSALWLTDPSSSVVEPKDSLIHSSSRDVQLVYGNENSENQQQHCQGFFTKELNFSGYGFDGSSNRNKTGISCKPESREILNFGDSSKRFSGQSQLGPGPGLMEENKNKNKNKKRSLGSRGNNEEGMLSFVSGVILPTSTMGKSGDSDHSDLEASVVKEAVVEPEKKPRKRGRKPANGREEPLNHVEAERQRREKLNQRFYALRAVVPNVSKMDKASLLGDAIAYINELKSKVQNSDLDKEELRSQIECLRKELTNKGSSNYSASPPLNQDVKIVDMDIDVKVIGWDAMIRIQCSKKNHPAARLMAALKDLDLDVHHASVSVVNDLMIQQATVKMGSRLYAQEQLRIALTSKIAESR.

2 disordered regions span residues 356-398 (FGDS…NNEE) and 430-463 (VKEAVVEPEKKPRKRGRKPANGREEPLNHVEAER). The span at 440 to 449 (KPRKRGRKPA) shows a compositional bias: basic residues. A compositionally biased stretch (basic and acidic residues) spans 450-463 (NGREEPLNHVEAER). The interval 453–466 (EEPLNHVEAERQRR) is basic motif; degenerate. In terms of domain architecture, bHLH spans 453 to 502 (EEPLNHVEAERQRREKLNQRFYALRAVVPNVSKMDKASLLGDAIAYINEL). A helix-loop-helix motif region spans residues 467-502 (EKLNQRFYALRAVVPNVSKMDKASLLGDAIAYINEL).

Highly expressed in trichomes and at lower levels in leaves and flowers. Expressed at low levels in roots, stems, leaves, flowers and fruits.

Its subcellular location is the nucleus. In terms of biological role, transcriptional activator that binds to the G-box motif (5'-AACGTG-3') found in a number of promoters of jasmonate-induced genes. Transcription activator involved in the transcriptional regulation of terpene biosynthesis in glandular trichomes. Binds to the promoter of the linalool synthase TPS5 and promotes TPS5 gene transactivation. Acts synergistically with EOT1 in the transactivation of TPS5. Involved in type VI glandular trichome development. Involved in the activation of terpene synthases required for volatile mono- and sesquiterpenes synthesis by the glandular cells of type VI trichomes. This Solanum lycopersicum (Tomato) protein is Transcription factor MYC1.